An 85-amino-acid chain; its full sequence is Progonadoliberin-2 (85 aa).

The N-terminal stretch at 1-23 is a signal peptide; it reads MCVSRLVLLFGLLLCVGAQLSNA. Gln24 carries the post-translational modification Pyrrolidone carboxylic acid. Position 33 is a glycine amide (Gly33).

It belongs to the GnRH family.

The protein resides in the secreted. Stimulates the secretion of gonadotropins. This is Progonadoliberin-2 (gnrh2) from Morone saxatilis (Striped bass).